The primary structure comprises 186 residues: Potassium-transporting ATPase KdpC subunit 1 (186 aa).

Residues 10–30 (LTIITMVLCGFLFPLAITLIG) form a helical membrane-spanning segment.

Belongs to the KdpC family. In terms of assembly, the system is composed of three essential subunits: KdpA, KdpB and KdpC.

The protein localises to the cell membrane. Its function is as follows. Part of the high-affinity ATP-driven potassium transport (or Kdp) system, which catalyzes the hydrolysis of ATP coupled with the electrogenic transport of potassium into the cytoplasm. This subunit acts as a catalytic chaperone that increases the ATP-binding affinity of the ATP-hydrolyzing subunit KdpB by the formation of a transient KdpB/KdpC/ATP ternary complex. This chain is Potassium-transporting ATPase KdpC subunit 1, found in Staphylococcus aureus (strain Mu50 / ATCC 700699).